Consider the following 877-residue polypeptide: Leucine--tRNA ligase (877 aa).

The short motif at P48 to H58 is the 'HIGH' region element. The short motif at K636–S640 is the 'KMSKS' region element. Residue K639 coordinates ATP.

It belongs to the class-I aminoacyl-tRNA synthetase family.

It localises to the cytoplasm. It catalyses the reaction tRNA(Leu) + L-leucine + ATP = L-leucyl-tRNA(Leu) + AMP + diphosphate. This chain is Leucine--tRNA ligase, found in Ralstonia pickettii (strain 12J).